We begin with the raw amino-acid sequence, 469 residues long: 3-isopropylmalate dehydratase large subunit (469 aa).

[4Fe-4S] cluster contacts are provided by cysteine 350, cysteine 410, and cysteine 413.

This sequence belongs to the aconitase/IPM isomerase family. LeuC type 1 subfamily. Heterodimer of LeuC and LeuD. It depends on [4Fe-4S] cluster as a cofactor.

The enzyme catalyses (2R,3S)-3-isopropylmalate = (2S)-2-isopropylmalate. It functions in the pathway amino-acid biosynthesis; L-leucine biosynthesis; L-leucine from 3-methyl-2-oxobutanoate: step 2/4. Functionally, catalyzes the isomerization between 2-isopropylmalate and 3-isopropylmalate, via the formation of 2-isopropylmaleate. The sequence is that of 3-isopropylmalate dehydratase large subunit from Rhodopseudomonas palustris (strain ATCC BAA-98 / CGA009).